Reading from the N-terminus, the 310-residue chain is Ribosomal RNA small subunit methyltransferase H (310 aa).

Residues 32-34 (GGH), D52, F79, D100, and Q107 each bind S-adenosyl-L-methionine.

The protein belongs to the methyltransferase superfamily. RsmH family.

The protein resides in the cytoplasm. It carries out the reaction cytidine(1402) in 16S rRNA + S-adenosyl-L-methionine = N(4)-methylcytidine(1402) in 16S rRNA + S-adenosyl-L-homocysteine + H(+). Its function is as follows. Specifically methylates the N4 position of cytidine in position 1402 (C1402) of 16S rRNA. This is Ribosomal RNA small subunit methyltransferase H from Bacillus cereus (strain B4264).